Here is a 740-residue protein sequence, read N- to C-terminus: Probable type IV piliation system protein DR_0774 (740 aa).

Residues 1–20 (MNKRHALLLTAVLGMATAYA) form the signal peptide.

This sequence belongs to the bacterial secretin family.

It localises to the cell envelope. Its function is as follows. Could be part of the type IV piliation system (T4P). May contribute at the cohesion between the S-layer and the outer membrane by forming oligomers. Could also be the main channel through which trafficking is managed. The sequence is that of Probable type IV piliation system protein DR_0774 from Deinococcus radiodurans (strain ATCC 13939 / DSM 20539 / JCM 16871 / CCUG 27074 / LMG 4051 / NBRC 15346 / NCIMB 9279 / VKM B-1422 / R1).